A 342-amino-acid chain; its full sequence is MSAWTHRHILDLSTFSREDYAAVLELAHRFSAMPVTGARRLPALQGRLVATLFFEPSTRTRSSFELAAKRLSADVSSFSPSSSSLSKGESLLDTARTYVAMGADVLVVRHRCTGVPRQLAEALERTGERTVVLNGGDGLHSHPSQGLLDLYTLAQHFNPSHPLPEALRGRRIVIVGDVLHSRVARSNLWALTACGADVILCGPPSLVPEAFAQFVAQPPPGQASDPVADRGALTVVRNLDDALAGADAVMTLRLQKERMRQHMLTSLDRYHRDFGLSHERLQVCQVPIPVLHPGPVNRGVEMSGALLDDLSANRVEDQVRNGIPIRMALLYLMAAAESPLSL.

2 residues coordinate carbamoyl phosphate: Arg59 and Thr60. Lys87 is a binding site for L-aspartate. Carbamoyl phosphate is bound by residues Arg109, His142, and Gln145. Positions 182 and 253 each coordinate L-aspartate. Residues Gly294 and Pro295 each contribute to the carbamoyl phosphate site.

Belongs to the aspartate/ornithine carbamoyltransferase superfamily. ATCase family. As to quaternary structure, heterododecamer (2C3:3R2) of six catalytic PyrB chains organized as two trimers (C3), and six regulatory PyrI chains organized as three dimers (R2).

It carries out the reaction carbamoyl phosphate + L-aspartate = N-carbamoyl-L-aspartate + phosphate + H(+). The protein operates within pyrimidine metabolism; UMP biosynthesis via de novo pathway; (S)-dihydroorotate from bicarbonate: step 2/3. Functionally, catalyzes the condensation of carbamoyl phosphate and aspartate to form carbamoyl aspartate and inorganic phosphate, the committed step in the de novo pyrimidine nucleotide biosynthesis pathway. In Synechococcus sp. (strain WH7803), this protein is Aspartate carbamoyltransferase catalytic subunit.